The sequence spans 483 residues: UDP-N-acetylmuramoyl-L-alanyl-D-glutamate--2,6-diaminopimelate ligase (483 aa).

Serine 29 is a UDP-N-acetyl-alpha-D-muramoyl-L-alanyl-D-glutamate binding site. 112–118 (GTNGKTT) provides a ligand contact to ATP. UDP-N-acetyl-alpha-D-muramoyl-L-alanyl-D-glutamate contacts are provided by residues 154 to 155 (TT), serine 181, and arginine 189. Lysine 221 is subject to N6-carboxylysine. Residues arginine 380, 404–407 (DNPR), glycine 454, and glutamate 458 contribute to the meso-2,6-diaminopimelate site. The Meso-diaminopimelate recognition motif signature appears at 404–407 (DNPR).

The protein belongs to the MurCDEF family. MurE subfamily. Mg(2+) is required as a cofactor. In terms of processing, carboxylation is probably crucial for Mg(2+) binding and, consequently, for the gamma-phosphate positioning of ATP.

Its subcellular location is the cytoplasm. It carries out the reaction UDP-N-acetyl-alpha-D-muramoyl-L-alanyl-D-glutamate + meso-2,6-diaminopimelate + ATP = UDP-N-acetyl-alpha-D-muramoyl-L-alanyl-gamma-D-glutamyl-meso-2,6-diaminopimelate + ADP + phosphate + H(+). The protein operates within cell wall biogenesis; peptidoglycan biosynthesis. Its function is as follows. Catalyzes the addition of meso-diaminopimelic acid to the nucleotide precursor UDP-N-acetylmuramoyl-L-alanyl-D-glutamate (UMAG) in the biosynthesis of bacterial cell-wall peptidoglycan. The chain is UDP-N-acetylmuramoyl-L-alanyl-D-glutamate--2,6-diaminopimelate ligase from Clostridium botulinum (strain ATCC 19397 / Type A).